We begin with the raw amino-acid sequence, 325 residues long: Ribosomal RNA small subunit methyltransferase H (325 aa).

Residues 42–44 (GGH), Asp62, Phe86, Asp105, and Gln112 each bind S-adenosyl-L-methionine.

This sequence belongs to the methyltransferase superfamily. RsmH family.

The protein localises to the cytoplasm. It catalyses the reaction cytidine(1402) in 16S rRNA + S-adenosyl-L-methionine = N(4)-methylcytidine(1402) in 16S rRNA + S-adenosyl-L-homocysteine + H(+). Specifically methylates the N4 position of cytidine in position 1402 (C1402) of 16S rRNA. The polypeptide is Ribosomal RNA small subunit methyltransferase H (Cupriavidus metallidurans (strain ATCC 43123 / DSM 2839 / NBRC 102507 / CH34) (Ralstonia metallidurans)).